A 184-amino-acid chain; its full sequence is Endoribonuclease YbeY (184 aa).

3 residues coordinate Zn(2+): histidine 118, histidine 122, and histidine 128. Positions 156-184 are disordered; that stretch reads YHQDRQSQKDQRLLDKSRYFDELNHGDTP. Positions 157–184 are enriched in basic and acidic residues; the sequence is HQDRQSQKDQRLLDKSRYFDELNHGDTP.

This sequence belongs to the endoribonuclease YbeY family. Requires Zn(2+) as cofactor.

The protein localises to the cytoplasm. Single strand-specific metallo-endoribonuclease involved in late-stage 70S ribosome quality control and in maturation of the 3' terminus of the 16S rRNA. This is Endoribonuclease YbeY from Mycolicibacterium vanbaalenii (strain DSM 7251 / JCM 13017 / BCRC 16820 / KCTC 9966 / NRRL B-24157 / PYR-1) (Mycobacterium vanbaalenii).